Reading from the N-terminus, the 333-residue chain is MARKKIALIGGGQIGGTLALLAGLKELGDVVIFDIAEGLPQGKALDLAQTGPVEGYNTALSGANDYKGIKGADVVIVTAGVPRKPGMSRDDLLGINLKVMKQVGEGIAKYAPNAFVVCITNPLDAMVWALRQFSGLPHNKVVGMAGVLDSGRFRLFLAEEFGVSVEDVTAFVLGGHGDTMVPLPRYSTVAGIPLPDLVKMGWTTKEKLDKIIQRTRDGGAEIVGLLKTGSAFYAPAASGIQMAEAYLKDQKRVLPCAAYINGQYGVKDMYVGVPVVIGAGGVERIVEIDLNGSEKKQFMNSVNAVKGLVDACKKIDPAVAKGAAPAKKAAKKK.

Residues 10–15 and Asp34 each bind NAD(+); that span reads GGGQIG. Positions 83 and 89 each coordinate substrate. NAD(+) is bound by residues Asn96 and 119–121; that span reads ITN. Substrate contacts are provided by Asn121 and Arg152. His176 functions as the Proton acceptor in the catalytic mechanism.

The protein belongs to the LDH/MDH superfamily. MDH type 3 family.

The catalysed reaction is (S)-malate + NAD(+) = oxaloacetate + NADH + H(+). Its function is as follows. Catalyzes the reversible oxidation of malate to oxaloacetate. The sequence is that of Malate dehydrogenase from Parvibaculum lavamentivorans (strain DS-1 / DSM 13023 / NCIMB 13966).